Consider the following 357-residue polypeptide: UPF0324 membrane protein BMEI1914 (357 aa).

Helical transmembrane passes span N29 to E48, A58 to A77, S90 to I112, G117 to I136, L149 to A171, A181 to L203, I210 to L232, L242 to N261, P268 to L290, A300 to I322, and L334 to V356.

The protein belongs to the UPF0324 family.

The protein resides in the cell membrane. This Brucella melitensis biotype 1 (strain ATCC 23456 / CCUG 17765 / NCTC 10094 / 16M) protein is UPF0324 membrane protein BMEI1914.